The following is a 706-amino-acid chain: Frizzled-6 (706 aa).

Residues 1–18 form the signal peptide; the sequence is MEMFTFLLTCIFLPLLRG. The region spanning 19–132 is the FZ domain; it reads HSLFTCEPIT…CDRLQYCDET (114 aa). Over 19-201 the chain is Extracellular; that stretch reads HSLFTCEPIT…SDELEFAKSF (183 aa). Disulfide bonds link Cys-24-Cys-85, Cys-32-Cys-78, Cys-69-Cys-106, Cys-95-Cys-129, and Cys-99-Cys-123. The N-linked (GlcNAc...) asparagine glycan is linked to Asn-38. The helical transmembrane segment at 202-222 threads the bilayer; the sequence is IGTVSIFCLCATLFTFLTFLI. The Cytoplasmic segment spans residues 223–233; it reads DVRRFRYPERP. The helical transmembrane segment at 234–254 threads the bilayer; sequence IIYYSVCYSIVSLMYFIGFLL. Residues 255-284 lie on the Extracellular side of the membrane; the sequence is GDSTACNKADEKLELGDTVVLGSQNKACTV. The helical transmembrane segment at 285-305 threads the bilayer; that stretch reads LFMLLYFFTMAGTVWWVILTI. The Cytoplasmic segment spans residues 306 to 324; sequence TWFLAAGRKWSCEAIEQKA. A helical transmembrane segment spans residues 325-345; the sequence is VWFHAVAWGTPGFLTVMLLAM. At 346–370 the chain is on the extracellular side; that stretch reads NKVEGDNISGVCFVGLYDLDASRYF. Residue Asn-352 is glycosylated (N-linked (GlcNAc...) asparagine). Residues 371–391 form a helical membrane-spanning segment; the sequence is VLLPLCLCVFVGLSLLLAGII. Topologically, residues 392-416 are cytoplasmic; it reads SLNHVRQVIQHDGRNQEKLKKFMIR. Residues 417–437 traverse the membrane as a helical segment; sequence IGVFSGLYLVPLVTLLGCYVY. At 438–473 the chain is on the extracellular side; the sequence is EQVNRITWEITWVSDHCRQYHIPCPYQAKAKARPEL. Residues 474–494 form a helical membrane-spanning segment; that stretch reads ALFMIKYLMTLIVGISAVFWV. The Cytoplasmic portion of the chain corresponds to 495–706; the sequence is GSKKTCTEWA…EQGGGCHSDT (212 aa). The short motif at 498 to 503 is the Lys-Thr-X-X-X-Trp motif, mediates interaction with the PDZ domain of Dvl family members element; the sequence is KTCTEW. The tract at residues 588–706 is disordered; the sequence is EIQTSPETSM…EQGGGCHSDT (119 aa). Residues 646-658 are compositionally biased toward basic and acidic residues; that stretch reads ARSEGRISPKSDI. Ser-653 bears the Phosphoserine mark. The span at 662–672 shows a compositional bias: polar residues; sequence GLAQSNNLQVP. A compositionally biased stretch (low complexity) spans 673–685; sequence SSSEPSSLKGSTS. The span at 694–706 shows a compositional bias: basic and acidic residues; the sequence is VRKEQGGGCHSDT.

It belongs to the G-protein coupled receptor Fz/Smo family. As to quaternary structure, interacts with LMBR1L. Ubiquitinated by ZNRF3, leading to its degradation by the proteasome. As to expression, detected in adult heart, brain, placenta, lung, liver, skeletal muscle, kidney, pancreas, thymus, prostate, testis, ovary, small intestine and colon. In the fetus, expressed in brain, lung, liver and kidney.

It localises to the membrane. The protein resides in the cell membrane. It is found in the cell surface. Its subcellular location is the apical cell membrane. The protein localises to the cytoplasmic vesicle membrane. It localises to the endoplasmic reticulum membrane. Receptor for Wnt proteins. Most of frizzled receptors are coupled to the beta-catenin canonical signaling pathway, which leads to the activation of disheveled proteins, inhibition of GSK-3 kinase, nuclear accumulation of beta-catenin and activation of Wnt target genes. A second signaling pathway involving PKC and calcium fluxes has been seen for some family members, but it is not yet clear if it represents a distinct pathway or if it can be integrated in the canonical pathway, as PKC seems to be required for Wnt-mediated inactivation of GSK-3 kinase. Both pathways seem to involve interactions with G-proteins. May be involved in transduction and intercellular transmission of polarity information during tissue morphogenesis and/or in differentiated tissues. Together with FZD3, is involved in the neural tube closure and plays a role in the regulation of the establishment of planar cell polarity (PCP), particularly in the orientation of asymmetric bundles of stereocilia on the apical faces of a subset of auditory and vestibular sensory cells located in the inner ear. The sequence is that of Frizzled-6 (FZD6) from Homo sapiens (Human).